The primary structure comprises 300 residues: Glutamyl-Q tRNA(Asp) synthetase (300 aa).

L-glutamate contacts are provided by residues 8 to 12 (RFAPS) and Glu-44. Positions 11 to 21 (PSPTGALHAGS) match the 'HIGH' region motif. Cys-100, Cys-102, Tyr-126, and Cys-130 together coordinate Zn(2+). Residues Tyr-190 and Arg-208 each contribute to the L-glutamate site. A 'KMSKS' region motif is present at residues 246–250 (KLSKQ). Lys-249 provides a ligand contact to ATP.

The protein belongs to the class-I aminoacyl-tRNA synthetase family. GluQ subfamily. Zn(2+) is required as a cofactor.

Catalyzes the tRNA-independent activation of glutamate in presence of ATP and the subsequent transfer of glutamate onto a tRNA(Asp). Glutamate is transferred on the 2-amino-5-(4,5-dihydroxy-2-cyclopenten-1-yl) moiety of the queuosine in the wobble position of the QUC anticodon. In Leptothrix cholodnii (strain ATCC 51168 / LMG 8142 / SP-6) (Leptothrix discophora (strain SP-6)), this protein is Glutamyl-Q tRNA(Asp) synthetase.